A 489-amino-acid polypeptide reads, in one-letter code: Pluviatolide synthase (489 aa).

The chain crosses the membrane as a helical span at residues 6 to 26; sequence SVLGLSSTLIIALAITVIFLL. Heme is bound at residue Cys432.

The protein belongs to the cytochrome P450 family. Heme serves as cofactor.

The protein resides in the membrane. The catalysed reaction is (-)-matairesinol + reduced [NADPH--hemoprotein reductase] + O2 = (-)-pluviatolide + oxidized [NADPH--hemoprotein reductase] + 2 H2O + H(+). It functions in the pathway aromatic compound metabolism; phenylpropanoid biosynthesis. Cytochrome P450 involved in the biosynthesis of etoposide, a chemotherapeutic compound of the topoisomerase inhibitor family. Catalyzes the conversion of matairesinol to pluviatolide. In Podophyllum peltatum (American mandrake), this protein is Pluviatolide synthase.